A 281-amino-acid polypeptide reads, in one-letter code: Phosphate import ATP-binding protein PstB 1 (281 aa).

The disordered stretch occupies residues 1 to 34 (MTENTAETADESSDGGVTATTGAATTTPTTPPEP). The segment covering 15-28 (GGVTATTGAATTTP) has biased composition (low complexity). One can recognise an ABC transporter domain in the interval 36–276 (IRARDLDVFY…PEHQRVEEYI (241 aa)). Position 68 to 75 (68 to 75 (GPSGCGKS)) interacts with ATP.

It belongs to the ABC transporter superfamily. Phosphate importer (TC 3.A.1.7) family. In terms of assembly, the complex is composed of two ATP-binding proteins (PstB), two transmembrane proteins (PstC and PstA) and a solute-binding protein (PstS).

It localises to the cell membrane. The catalysed reaction is phosphate(out) + ATP + H2O = ADP + 2 phosphate(in) + H(+). In terms of biological role, part of the ABC transporter complex PstSACB involved in phosphate import. Responsible for energy coupling to the transport system. This Halobacterium salinarum (strain ATCC 700922 / JCM 11081 / NRC-1) (Halobacterium halobium) protein is Phosphate import ATP-binding protein PstB 1.